The primary structure comprises 328 residues: Lactamase-like protein nscB (328 aa).

Zn(2+) is bound by residues H97, H99, D101, and H102. D101 (proton donor/acceptor) is an active-site residue.

The protein belongs to the metallo-beta-lactamase superfamily. Zn(2+) serves as cofactor.

It participates in secondary metabolite biosynthesis. Lactamase-like protein; part of the gene cluster that mediates the biosynthesis of neosartoricin, a prenylated anthracenone that exhibits T-cell antiproliferative activity, suggestive of a physiological role as an immunosuppressive agent. The non-reducing polyketide synthase nscA probably synthesizes and cyclizes the decaketide backbone. The hydrolase nscB then mediates the product release through hydrolysis followed by spontaneous decarboxylation. The prenyltransferase nscD catalyzes the addition of the dimethylallyl group to the aromatic C5. The FAD-dependent monooxygenase nscC is then responsible for the stereospecific hydroxylation at C2. There is no gene encoding O-acetyltransferase in the nsc gene cluster; thus, the last step of 2-O-acetylation leading to neosartoricin may be catalyzed by an unidentified O-acetyltransferase. This chain is Lactamase-like protein nscB, found in Neosartorya fischeri (strain ATCC 1020 / DSM 3700 / CBS 544.65 / FGSC A1164 / JCM 1740 / NRRL 181 / WB 181) (Aspergillus fischerianus).